The sequence spans 197 residues: Small ribosomal subunit protein uS10c (197 aa).

Residues 1–60 constitute a chloroplast transit peptide; it reads MATSSLSTIVFSPLALSNSSSFPNKPQVSNLSLHSSLSNLRRTLSHSSPSSSSSSNVRVF. The disordered stretch occupies residues 67-91; the sequence is ESQETGPESYVEEGSETSALGIGAD.

The protein belongs to the universal ribosomal protein uS10 family. Part of the 30S ribosomal subunit.

It localises to the plastid. The protein localises to the chloroplast. This chain is Small ribosomal subunit protein uS10c (RPS10), found in Mesembryanthemum crystallinum (Common ice plant).